Reading from the N-terminus, the 382-residue chain is Queuine tRNA-ribosyltransferase (382 aa).

D96 serves as the catalytic Proton acceptor. Substrate-binding positions include 96–100 (DSGGF), D151, Q194, and G221. The tract at residues 252-258 (GVGAPDS) is RNA binding. The active-site Nucleophile is the D271. Residues 276-280 (TRIAR) form an RNA binding; important for wobble base 34 recognition region. Zn(2+) contacts are provided by C309, C311, C314, and H340.

It belongs to the queuine tRNA-ribosyltransferase family. Homodimer. Within each dimer, one monomer is responsible for RNA recognition and catalysis, while the other monomer binds to the replacement base PreQ1. The cofactor is Zn(2+).

The enzyme catalyses 7-aminomethyl-7-carbaguanine + guanosine(34) in tRNA = 7-aminomethyl-7-carbaguanosine(34) in tRNA + guanine. It participates in tRNA modification; tRNA-queuosine biosynthesis. Its function is as follows. Catalyzes the base-exchange of a guanine (G) residue with the queuine precursor 7-aminomethyl-7-deazaguanine (PreQ1) at position 34 (anticodon wobble position) in tRNAs with GU(N) anticodons (tRNA-Asp, -Asn, -His and -Tyr). Catalysis occurs through a double-displacement mechanism. The nucleophile active site attacks the C1' of nucleotide 34 to detach the guanine base from the RNA, forming a covalent enzyme-RNA intermediate. The proton acceptor active site deprotonates the incoming PreQ1, allowing a nucleophilic attack on the C1' of the ribose to form the product. After dissociation, two additional enzymatic reactions on the tRNA convert PreQ1 to queuine (Q), resulting in the hypermodified nucleoside queuosine (7-(((4,5-cis-dihydroxy-2-cyclopenten-1-yl)amino)methyl)-7-deazaguanosine). This chain is Queuine tRNA-ribosyltransferase, found in Lactococcus lactis subsp. cremoris (strain SK11).